The chain runs to 534 residues: GTPase Obg (534 aa).

The Obg domain occupies 2–159; that stretch reads ASFVDRVVLH…SDIVLELKSI (158 aa). Residues 63-82 are disordered; sequence APHRHASNGGQGMGDWRGGK. The segment covering 71–82 has biased composition (gly residues); sequence GGQGMGDWRGGK. Positions 160–343 constitute an OBG-type G domain; it reads ADIALVGFPS…LSFAMAELVT (184 aa). Residues 166–173, 191–195, 212–215, 295–298, and 324–326 each bind GTP; these read GFPSAGKS, FTTLI, DVPG, NKID, and SAS. Residues serine 173 and threonine 193 each contribute to the Mg(2+) site. Positions 363–449 constitute an OCT domain; sequence PRAVNRKEFT…ENAVVFDWEP (87 aa). The tract at residues 456 to 534 is disordered; that stretch reads ELLSGPRGTD…AASTDDGDAL (79 aa). 2 stretches are compositionally biased toward basic and acidic residues: residues 464-504 and 512-526; these read TDPR…ERKA and SARR…REAA.

Belongs to the TRAFAC class OBG-HflX-like GTPase superfamily. OBG GTPase family. In terms of assembly, monomer. The cofactor is Mg(2+).

It localises to the cytoplasm. In terms of biological role, an essential GTPase which binds GTP, GDP and possibly (p)ppGpp with moderate affinity, with high nucleotide exchange rates and a fairly low GTP hydrolysis rate. Plays a role in control of the cell cycle, stress response, ribosome biogenesis and in those bacteria that undergo differentiation, in morphogenesis control. This chain is GTPase Obg, found in Renibacterium salmoninarum (strain ATCC 33209 / DSM 20767 / JCM 11484 / NBRC 15589 / NCIMB 2235).